Consider the following 243-residue polypeptide: Venom peptide isomerase heavy chain (243 aa).

The 243-residue stretch at 1-243 folds into the Peptidase S1 domain; the sequence is IVGGKTAKFG…YTNWMSKNMV (243 aa). Cysteines 31 and 47 form a disulfide. Catalysis depends on charge relay system residues histidine 46 and aspartate 96. N-linked (GlcNAc...) asparagine glycosylation occurs at asparagine 127. Intrachain disulfides connect cysteine 159-cysteine 181 and cysteine 190-cysteine 219. Serine 194 functions as the Charge relay system in the catalytic mechanism.

It belongs to the peptidase S1 family. In terms of assembly, heterodimer with venom peptide isomerase light chain; disulfide-linked. Post-translationally, N-linked glycan at Asn-127 consists of Man3-GlcNAc2-Fuc. As to expression, expressed by the venom gland.

The protein localises to the secreted. Functionally, peptide isomerase that inverts the chirality at the Ser-81 of omega-Aga IVB. Acts cofactor-independently. This is Venom peptide isomerase heavy chain from Agelenopsis aperta (North American funnel-web spider).